Here is a 499-residue protein sequence, read N- to C-terminus: Probable cytosol aminopeptidase (499 aa).

Residues Lys-268 and Asp-273 each contribute to the Mn(2+) site. Lys-280 is a catalytic residue. Mn(2+)-binding residues include Asp-291, Asp-350, and Glu-352. Residue Arg-354 is part of the active site.

It belongs to the peptidase M17 family. Mn(2+) serves as cofactor.

It is found in the cytoplasm. The enzyme catalyses Release of an N-terminal amino acid, Xaa-|-Yaa-, in which Xaa is preferably Leu, but may be other amino acids including Pro although not Arg or Lys, and Yaa may be Pro. Amino acid amides and methyl esters are also readily hydrolyzed, but rates on arylamides are exceedingly low.. It carries out the reaction Release of an N-terminal amino acid, preferentially leucine, but not glutamic or aspartic acids.. In terms of biological role, presumably involved in the processing and regular turnover of intracellular proteins. Catalyzes the removal of unsubstituted N-terminal amino acids from various peptides. This Halorhodospira halophila (strain DSM 244 / SL1) (Ectothiorhodospira halophila (strain DSM 244 / SL1)) protein is Probable cytosol aminopeptidase.